Here is a 129-residue protein sequence, read N- to C-terminus: Small ribosomal subunit protein uS11 (129 aa).

It belongs to the universal ribosomal protein uS11 family. As to quaternary structure, part of the 30S ribosomal subunit. Interacts with proteins S7 and S18. Binds to IF-3.

Its function is as follows. Located on the platform of the 30S subunit, it bridges several disparate RNA helices of the 16S rRNA. Forms part of the Shine-Dalgarno cleft in the 70S ribosome. The chain is Small ribosomal subunit protein uS11 from Methylorubrum populi (strain ATCC BAA-705 / NCIMB 13946 / BJ001) (Methylobacterium populi).